A 963-amino-acid chain; its full sequence is Thrombospondin-4 (963 aa).

Positions 1 to 26 (MPAPRAAAAAFLLLHLVLQPWQRTSA) are cleaved as a signal peptide. In terms of domain architecture, Laminin G-like spans 29–194 (TPQVFDLLPS…LEELKLVVRG (166 aa)). The Cell attachment site motif lies at 138-140 (RGD). The 40-residue stretch at 288-327 (PTRHCDSSPCFRGVRCTDTRDGFQCGPCPDGYTGNGITCS) folds into the EGF-like 1 domain. 21 disulfides stabilise this stretch: C292–C303, C297–C312, C315–C326, C332–C343, C337–C352, C355–C379, C385–C396, C390–C405, C408–C420, C426–C440, C434–C450, C452–C463, C479–C484, C489–C509, C525–C545, C548–C568, C584–C604, C607–C627, C645–C665, C685–C705, and C721–C942. The 38-residue stretch at 328-365 (DVDECKYHPCYPGVRCVNLAPGFRCDACPVGFTGPMVQ) folds into the EGF-like 2; calcium-binding domain. In terms of domain architecture, EGF-like 3; calcium-binding spans 381–418 (DVDECQNGACVLNSICINTLGSYRCGPCKPGYTGDQTR). In terms of domain architecture, EGF-like 4 spans 422–464 (TERSCRNPEQNPCSVHAQCIEERQGDVTCVCGVGWAGDGYVCG). TSP type-3 repeat units lie at residues 465–497 (KDVDIDSYPDEELPCSARNCKKDNCKYVPNSGQ), 498–533 (EDADRDGIGDACDEDADGDGILNEQDNCVLTHNIDQ), 534–556 (RNSDKDIFGDACDNCRMVLNNDQ), 557–592 (KDTDGDGRGDACDDDMDGDGIKNILDNCPRVPNRDQ), 593–615 (QDRDGDDVGDACDSCPDVSNPNQ), 616–653 (SDVDNDLVGDSCDTNQDSDGDGHQDSTDNCPTVINSSQ), 654–693 (LDTDKDGIGDECDDDDDNDGIPDLVPPGPDNCRLVPNPAQ), and 694–729 (EDSNNDGVGDICEADFDQDQVIDHIDVCPENAEITL). The Cell attachment site motif lies at 564–566 (RGD). Residues 579-676 (NILDNCPRVP…DDDDNDGIPD (98 aa)) are disordered. N-linked (GlcNAc...) asparagine glycans are attached at residues N614 and N650. The segment covering 642 to 654 (TDNCPTVINSSQL) has biased composition (polar residues). Residues 662–673 (GDECDDDDDNDG) are compositionally biased toward acidic residues. The 215-residue stretch at 733–947 (RAYQTVVLDP…LKYRCNDTIP (215 aa)) folds into the TSP C-terminal domain. N943 carries an N-linked (GlcNAc...) asparagine glycan.

Belongs to the thrombospondin family. Homopentamer; disulfide-linked. Interacts with PTBP3. Interacts (via EGF-like 3; calcium-binding domain) with ATF6 and facilitates its processing, activation and nuclear translocation. Interacts with NOTCH1. Heart. Up-regulated in the heart in response to ischemic injury and pathology (at protein level). Astrocytes; expressed at high levels in subventricular zone (SVZ)-derived astrocytes and at low levels in cortical astrocytes. In response to peripheral nerve injury, significantly up-regulated in the dorsal spinal cord (at protein level).

The protein localises to the endoplasmic reticulum. It localises to the sarcoplasmic reticulum. It is found in the secreted. Its subcellular location is the extracellular space. The protein resides in the extracellular matrix. In terms of biological role, adhesive glycoprotein that mediates cell-to-cell and cell-to-matrix interactions and is involved in various processes including cellular proliferation, migration, adhesion and attachment, inflammatory response to CNS injury, regulation of vascular inflammation and adaptive responses of the heart to pressure overload and in myocardial function and remodeling. Binds to structural extracellular matrix (ECM) proteins and modulates the ECM in response to tissue damage, contributing to cardioprotective and adaptive ECM remodeling. Plays a role in ER stress response, via its interaction with the activating transcription factor 6 alpha (ATF6) which produces adaptive ER stress response factors and protects myocardium from pressure overload. May contribute to spinal presynaptic hypersensitivity and neuropathic pain states after peripheral nerve injury. May play a role in regulating protective astrogenesis from the subventricular zone (SVZ) niche after injury in a NOTCH1-dependent manner. The protein is Thrombospondin-4 (Thbs4) of Mus musculus (Mouse).